The chain runs to 540 residues: MPNKSSATSMRSGHIAPVVLTILDGWGHREENINNAINNADTPVMDALWQAYPHTLIEASGADVGLPDNQMGNSEVGHLTIGAGRIIQQELVRISNTIRSKKLDQITNLSNLANKLIETDKTLHLVGLCSDGGVHSHINHLCGLLEWAKNKGIQKVAVHAFTDGRDTPAKSSLQYLKIIKEKFEVLGIGELATLCGRYWSMDRDNRWERIEKAYELLTNPNYPLSELSSDEIITNSYDSSITDEFLEPIRLTPSYLKDGDGLIMFNFRPDRARQLIKSITLPSFSEFKRKYQPQLNVVTLTQYEMDLPVSVVFPPESLDNLLGQVISEHGLLQYRTAETEKYPHVTYFFNGGIEQPLPGEKRHLVPSPRVATYDLSPEMSAEKLTKSCQEAIESGIYSLIVINYANPDMVGHTGIHAATKKAISTVDKCIGKILDSTGKMSGTLLITADHGNAELMKGPDGEPWTAHTTNPVPVILIEGEKRKISGQGNQIRLREGGGLADIAPTLLEVLSLPKPDAMTGSSLIETIQTNSKTNLVQQHV.

Positions 24 and 74 each coordinate Mn(2+). The active-site Phosphoserine intermediate is the serine 74. Substrate contacts are provided by residues histidine 135, 165–166 (RD), arginine 197, arginine 203, 268–271 (RPDR), and lysine 341. Mn(2+) contacts are provided by aspartate 408, histidine 412, aspartate 449, histidine 450, and histidine 467.

It belongs to the BPG-independent phosphoglycerate mutase family. Monomer. Mn(2+) serves as cofactor.

The enzyme catalyses (2R)-2-phosphoglycerate = (2R)-3-phosphoglycerate. It functions in the pathway carbohydrate degradation; glycolysis; pyruvate from D-glyceraldehyde 3-phosphate: step 3/5. In terms of biological role, catalyzes the interconversion of 2-phosphoglycerate and 3-phosphoglycerate. This is 2,3-bisphosphoglycerate-independent phosphoglycerate mutase from Prochlorococcus marinus (strain SARG / CCMP1375 / SS120).